The following is a 148-amino-acid chain: Endoribonuclease YbeY (148 aa).

Residues His-113, His-117, and His-123 each contribute to the Zn(2+) site.

The protein belongs to the endoribonuclease YbeY family. The cofactor is Zn(2+).

The protein localises to the cytoplasm. Single strand-specific metallo-endoribonuclease involved in late-stage 70S ribosome quality control and in maturation of the 3' terminus of the 16S rRNA. This is Endoribonuclease YbeY from Borrelia hermsii (strain HS1 / DAH).